A 290-amino-acid chain; its full sequence is GTPase Era (290 aa).

The Era-type G domain occupies 2 to 169; it reads KSGFVSIIGR…KDKIYENLQE (168 aa). The G1 stretch occupies residues 10–17; it reads GRPSTGKS. A GTP-binding site is contributed by 10 to 17; sequence GRPSTGKS. The interval 36–40 is G2; sequence QTTRN. The G3 stretch occupies residues 57-60; the sequence is DTPG. Residues 57–61 and 119–122 each bind GTP; these read DTPGF and NKID. Residues 119–122 are G4; sequence NKID. Residues 148 to 150 are G5; that stretch reads ISA. The KH type-2 domain occupies 200–276; that stretch reads LKEELPYSLY…DLFLQVKLRK (77 aa).

Belongs to the TRAFAC class TrmE-Era-EngA-EngB-Septin-like GTPase superfamily. Era GTPase family. As to quaternary structure, monomer.

It is found in the cytoplasm. It localises to the cell inner membrane. Its function is as follows. An essential GTPase that binds both GDP and GTP, with rapid nucleotide exchange. Plays a role in 16S rRNA processing and 30S ribosomal subunit biogenesis and possibly also in cell cycle regulation and energy metabolism. This chain is GTPase Era, found in Borrelia turicatae (strain 91E135).